Here is a 95-residue protein sequence, read N- to C-terminus: MKTLVLLSALVLLAFQVQADPIQNTDEETNTEEQPGEEDQAVSVSFGDPEGSALHEKSSRDLICYCRKGGCNRGEQVYGTCSGRLLFCCRRRHRH.

The N-terminal stretch at 1-19 (MKTLVLLSALVLLAFQVQA) is a signal peptide. Positions 20-58 (DPIQNTDEETNTEEQPGEEDQAVSVSFGDPEGSALHEKS) are excised as a propeptide. The interval 22 to 57 (IQNTDEETNTEEQPGEEDQAVSVSFGDPEGSALHEK) is disordered. Over residues 25–40 (TDEETNTEEQPGEEDQ) the composition is skewed to acidic residues. 3 cysteine pairs are disulfide-bonded: cysteine 64/cysteine 89, cysteine 66/cysteine 81, and cysteine 71/cysteine 88.

The protein belongs to the alpha-defensin family.

The protein localises to the secreted. In terms of biological role, may have microbicidal activities. The chain is Alpha-defensin 20 (Defa20) from Mus musculus (Mouse).